Consider the following 648-residue polypeptide: Probable ATP-dependent RNA helicase DDX43 (648 aa).

The disordered stretch occupies residues 1-60; the sequence is MSHHGGAPKASTWVVASRRSSTVSRAPERRPAEELNRTGPEGYSVGRGGRWRGTSRPPEA. Low complexity predominate over residues 10 to 25; the sequence is ASTWVVASRRSSTVSR. A compositionally biased stretch (basic and acidic residues) spans 26–36; sequence APERRPAEELN. A KH domain is found at 67 to 128; the sequence is ELPLCFALKS…AMQTKAKAVI (62 aa). A Q motif motif is present at residues 242-270; the sequence is TFDDAFQCYPEVMENIKKAGFQKPTPIQS. In terms of domain architecture, Helicase ATP-binding spans 273 to 448; the sequence is WPIVLQGIDL…QSYLKEPMIV (176 aa). An ATP-binding site is contributed by 286–293; the sequence is AQTGTGKT. The DEAD box motif lies at 396–399; it reads DEAD. In terms of domain architecture, Helicase C-terminal spans 460 to 621; it reads SVKQNIIVTT…SIPEELVSMA (162 aa). Residues 628 to 641 are compositionally biased toward basic and acidic residues; that stretch reads QQKREMERKMERPQ. The interval 628–648 is disordered; the sequence is QQKREMERKMERPQGRPKKFH.

Belongs to the DEAD box helicase family. In terms of tissue distribution, expressed in testis. Expressed in many tumors of various histological types at a level that is 100-fold higher than the level observed in normal tissues except testis.

The catalysed reaction is ATP + H2O = ADP + phosphate + H(+). The protein is Probable ATP-dependent RNA helicase DDX43 (DDX43) of Homo sapiens (Human).